A 118-amino-acid polypeptide reads, in one-letter code: Large ribosomal subunit protein bL20 (118 aa).

The protein belongs to the bacterial ribosomal protein bL20 family.

Functionally, binds directly to 23S ribosomal RNA and is necessary for the in vitro assembly process of the 50S ribosomal subunit. It is not involved in the protein synthesizing functions of that subunit. This chain is Large ribosomal subunit protein bL20, found in Protochlamydia amoebophila (strain UWE25).